A 421-amino-acid polypeptide reads, in one-letter code: Glycosaminoglycan xylosylkinase homolog (421 aa).

The first 21 residues, 1 to 21, serve as a signal peptide directing secretion; it reads MNKRSVIIAGIVASLLGLALG. The N-linked (GlcNAc...) asparagine glycan is linked to Asn-83. Gln-131 and Lys-147 together coordinate ATP. Mn(2+) is bound at residue Asp-166. 2 disulfides stabilise this stretch: Cys-225–Cys-240 and Cys-230–Cys-233. 252–255 lines the ATP pocket; that stretch reads IYIV. 2 disulfide bridges follow: Cys-285–Cys-351 and Cys-352–Cys-409. Asp-314 is an active-site residue. 2 residues coordinate ATP: Glu-319 and Asp-329. Asp-329 contributes to the Mn(2+) binding site.

This sequence belongs to the FAM20 family. The cofactor is Mn(2+).

Its subcellular location is the golgi apparatus. It localises to the endoplasmic reticulum. It carries out the reaction 3-O-(beta-D-galactosyl-(1-&gt;3)-beta-D-galactosyl-(1-&gt;4)-beta-D-xylosyl)-L-seryl-[protein] + ATP = 3-O-(beta-D-galactosyl-(1-&gt;3)-beta-D-galactosyl-(1-&gt;4)-beta-D-2-O-phosphoxylosyl)-L-seryl-[protein] + ADP + H(+). Kylose kinase that mediates the 2-O-phosphorylation of xylose in the glycosaminoglycan-protein linkage region of proteoglycans. The polypeptide is Glycosaminoglycan xylosylkinase homolog (Drosophila melanogaster (Fruit fly)).